A 246-amino-acid chain; its full sequence is 1-(5-phosphoribosyl)-5-[(5-phosphoribosylamino)methylideneamino] imidazole-4-carboxamide isomerase (246 aa).

Aspartate 8 serves as the catalytic Proton acceptor. The active-site Proton donor is the aspartate 130.

It belongs to the HisA/HisF family.

It is found in the cytoplasm. It carries out the reaction 1-(5-phospho-beta-D-ribosyl)-5-[(5-phospho-beta-D-ribosylamino)methylideneamino]imidazole-4-carboxamide = 5-[(5-phospho-1-deoxy-D-ribulos-1-ylimino)methylamino]-1-(5-phospho-beta-D-ribosyl)imidazole-4-carboxamide. Its pathway is amino-acid biosynthesis; L-histidine biosynthesis; L-histidine from 5-phospho-alpha-D-ribose 1-diphosphate: step 4/9. The protein is 1-(5-phosphoribosyl)-5-[(5-phosphoribosylamino)methylideneamino] imidazole-4-carboxamide isomerase of Alcanivorax borkumensis (strain ATCC 700651 / DSM 11573 / NCIMB 13689 / SK2).